The sequence spans 538 residues: Chaperonin GroEL 1 (538 aa).

ATP is bound by residues 29-32 (TLGP), 86-90 (DGTTT), Gly-413, and Asp-494.

Belongs to the chaperonin (HSP60) family. In terms of assembly, forms a cylinder of 14 subunits composed of two heptameric rings stacked back-to-back. Interacts with the co-chaperonin GroES.

The protein localises to the cytoplasm. The enzyme catalyses ATP + H2O + a folded polypeptide = ADP + phosphate + an unfolded polypeptide.. In terms of biological role, together with its co-chaperonin GroES, plays an essential role in assisting protein folding. The GroEL-GroES system forms a nano-cage that allows encapsulation of the non-native substrate proteins and provides a physical environment optimized to promote and accelerate protein folding. This Mycolicibacterium paratuberculosis (strain ATCC BAA-968 / K-10) (Mycobacterium paratuberculosis) protein is Chaperonin GroEL 1.